The following is a 303-amino-acid chain: 1-phosphofructokinase (303 aa).

Residue 248–249 (GD) coordinates ATP. Asp249 serves as the catalytic Proton acceptor.

The protein belongs to the carbohydrate kinase PfkB family.

It catalyses the reaction beta-D-fructose 1-phosphate + ATP = beta-D-fructose 1,6-bisphosphate + ADP + H(+). Its function is as follows. Catalyzes the ATP-dependent phosphorylation of fructose-l-phosphate to fructose-l,6-bisphosphate. The polypeptide is 1-phosphofructokinase (fruK) (Bacillus subtilis (strain 168)).